A 138-amino-acid chain; its full sequence is Basic phospholipase A2 Drk-b1 (138 aa).

Positions 1–16 (MRTLWIVAMCLIGVEG) are cleaved as a signal peptide. 7 disulfides stabilise this stretch: C42–C131, C44–C60, C59–C111, C65–C138, C66–C104, C73–C97, and C91–C102. Residues Y43, G45, and G47 each contribute to the Ca(2+) site. The active site involves H63. D64 contacts Ca(2+). D105 is an active-site residue.

Requires Ca(2+) as cofactor. As to expression, expressed by the venom gland.

Its subcellular location is the secreted. It catalyses the reaction a 1,2-diacyl-sn-glycero-3-phosphocholine + H2O = a 1-acyl-sn-glycero-3-phosphocholine + a fatty acid + H(+). In terms of biological role, exhibits high hydrolytic activities and shows strong preference for the anionic micelles (dPPC with deoxycholate) to the zwitterionic micelles (dPPC with Triton X-100). PLA2 catalyzes the calcium-dependent hydrolysis of the 2-acyl groups in 3-sn-phosphoglycerides. The sequence is that of Basic phospholipase A2 Drk-b1 from Daboia russelii (Russel's viper).